Consider the following 498-residue polypeptide: ATP synthase subunit beta, chloroplastic (498 aa).

Position 172-179 (172-179 (GGAGVGKT)) interacts with ATP.

This sequence belongs to the ATPase alpha/beta chains family. As to quaternary structure, F-type ATPases have 2 components, CF(1) - the catalytic core - and CF(0) - the membrane proton channel. CF(1) has five subunits: alpha(3), beta(3), gamma(1), delta(1), epsilon(1). CF(0) has four main subunits: a(1), b(1), b'(1) and c(9-12).

It localises to the plastid. It is found in the chloroplast thylakoid membrane. The catalysed reaction is ATP + H2O + 4 H(+)(in) = ADP + phosphate + 5 H(+)(out). Functionally, produces ATP from ADP in the presence of a proton gradient across the membrane. The catalytic sites are hosted primarily by the beta subunits. This chain is ATP synthase subunit beta, chloroplastic, found in Montinia caryophyllacea (Wild clove bush).